A 508-amino-acid chain; its full sequence is Lysine--tRNA ligase (508 aa).

Mg(2+) is bound by residues Glu416 and Glu423.

This sequence belongs to the class-II aminoacyl-tRNA synthetase family. As to quaternary structure, homodimer. The cofactor is Mg(2+).

The protein resides in the cytoplasm. The catalysed reaction is tRNA(Lys) + L-lysine + ATP = L-lysyl-tRNA(Lys) + AMP + diphosphate. The polypeptide is Lysine--tRNA ligase (Prochlorococcus marinus (strain MIT 9303)).